The following is a 301-amino-acid chain: Glutamine amidotransferase-like protein GlxB (301 aa).

The active site involves C2. Positions 2–298 (CGIVGLFLKD…PATVYFWDHQ (297 aa)) constitute a Glutamine amidotransferase type-2 domain.

This chain is Glutamine amidotransferase-like protein GlxB (glxB), found in Rhizobium meliloti (strain 1021) (Ensifer meliloti).